The chain runs to 379 residues: 1-deoxy-D-xylulose 5-phosphate reductoisomerase (379 aa).

NADPH-binding residues include T10, G11, S12, I13, N39, and N121. K122 serves as a coordination point for 1-deoxy-D-xylulose 5-phosphate. Residue E123 coordinates NADPH. D147 is a Mn(2+) binding site. 1-deoxy-D-xylulose 5-phosphate contacts are provided by S148, E149, S173, and H196. E149 lines the Mn(2+) pocket. An NADPH-binding site is contributed by G202. Residues S209, N214, K215, and E218 each coordinate 1-deoxy-D-xylulose 5-phosphate. E218 contributes to the Mn(2+) binding site.

This sequence belongs to the DXR family. The cofactor is Mg(2+). Mn(2+) serves as cofactor.

It carries out the reaction 2-C-methyl-D-erythritol 4-phosphate + NADP(+) = 1-deoxy-D-xylulose 5-phosphate + NADPH + H(+). It participates in isoprenoid biosynthesis; isopentenyl diphosphate biosynthesis via DXP pathway; isopentenyl diphosphate from 1-deoxy-D-xylulose 5-phosphate: step 1/6. Its function is as follows. Catalyzes the NADPH-dependent rearrangement and reduction of 1-deoxy-D-xylulose-5-phosphate (DXP) to 2-C-methyl-D-erythritol 4-phosphate (MEP). This chain is 1-deoxy-D-xylulose 5-phosphate reductoisomerase, found in Chlamydia caviae (strain ATCC VR-813 / DSM 19441 / 03DC25 / GPIC) (Chlamydophila caviae).